Reading from the N-terminus, the 208-residue chain is 3,4-dihydroxy-2-butanone 4-phosphate synthase (208 aa).

At threonine 3 the chain carries Phosphothreonine. Glutamate 27 is a Mg(2+) binding site. A D-ribulose 5-phosphate-binding site is contributed by aspartate 31. Cysteine 56 carries the S-glutathionyl cysteine; by GRX2 modification. D-ribulose 5-phosphate is bound by residues threonine 88 and 145-149; that span reads RRGHT. A Mg(2+)-binding site is contributed by histidine 148.

The protein belongs to the DHBP synthase family. As to quaternary structure, homodimer. It depends on Mg(2+) as a cofactor. Mn(2+) is required as a cofactor. S-glutathionylation of Cys-56 is reversible and dependent on the cytoplasmic isoform of glutaredoxin-2.

The protein resides in the cytoplasm. Its subcellular location is the nucleus. It localises to the mitochondrion intermembrane space. The enzyme catalyses D-ribulose 5-phosphate = (2S)-2-hydroxy-3-oxobutyl phosphate + formate + H(+). Its pathway is cofactor biosynthesis; riboflavin biosynthesis; 2-hydroxy-3-oxobutyl phosphate from D-ribulose 5-phosphate: step 1/1. Functionally, catalyzes the conversion of D-ribulose 5-phosphate to formate and 3,4-dihydroxy-2-butanone 4-phosphate. Also has an unrelated function in expression of mitochondrial respiration. The polypeptide is 3,4-dihydroxy-2-butanone 4-phosphate synthase (RIB3) (Saccharomyces cerevisiae (strain ATCC 204508 / S288c) (Baker's yeast)).